Consider the following 506-residue polypeptide: Alpha-L-arabinofuranosidase B (506 aa).

Positions 1-26 are cleaved as a signal peptide; that stretch reads MSSGLSLERACAVALGIVASASLVAA. The tract at residues 27-343 is catalytic; sequence GPCDIYSSGG…ADIVAAKYAI (317 aa). Intrachain disulfides connect C29-C39, C89-C94, and C184-C185. N-linked (GlcNAc...) asparagine glycosylation occurs at N91. Substrate is bound at residue D227. E229 functions as the Nucleophile in the catalytic mechanism. Substrate contacts are provided by N230 and G304. The active-site Proton donor is the D305. The interval 344 to 506 is ABD; sequence ASLTSGPALT…VSWVVSTGFA (163 aa). Residues C409 and C447 are joined by a disulfide bond. Residues H424, N426, F427, D443, H471, E473, L476, and D496 each coordinate substrate.

Belongs to the glycosyl hydrolase 54 family.

The protein resides in the secreted. The enzyme catalyses Hydrolysis of terminal non-reducing alpha-L-arabinofuranoside residues in alpha-L-arabinosides.. It participates in glycan metabolism; L-arabinan degradation. Functionally, alpha-L-arabinofuranosidase involved in the degradation of arabinoxylan, a major component of plant hemicellulose. Able to hydrolyze 1,5-, 1,3- and 1,2-alpha-linkages not only in L-arabinofuranosyl oligosaccharides, but also in polysaccharides containing terminal non-reducing L-arabinofuranoses in side chains, like L-arabinan, arabinogalactan and arabinoxylan. In Aspergillus oryzae (strain ATCC 42149 / RIB 40) (Yellow koji mold), this protein is Alpha-L-arabinofuranosidase B (abfB).